A 358-amino-acid chain; its full sequence is Phenylalanine--tRNA ligase alpha subunit (358 aa).

Position 262 (glutamate 262) interacts with Mg(2+).

Belongs to the class-II aminoacyl-tRNA synthetase family. Phe-tRNA synthetase alpha subunit type 1 subfamily. Tetramer of two alpha and two beta subunits. Mg(2+) serves as cofactor.

It is found in the cytoplasm. The enzyme catalyses tRNA(Phe) + L-phenylalanine + ATP = L-phenylalanyl-tRNA(Phe) + AMP + diphosphate + H(+). In Streptomyces coelicolor (strain ATCC BAA-471 / A3(2) / M145), this protein is Phenylalanine--tRNA ligase alpha subunit (pheS).